The following is a 301-amino-acid chain: t-SNARE affecting a late Golgi compartment protein 2 (301 aa).

The Cytoplasmic segment spans residues 1-279 (MAYRDRTGLY…SHQKNTGRLR (279 aa)). A coiled-coil region spans residues 92-120 (SDKTEQENEIQRLTIQITQDFQRCQKLLQ). Residues 206–268 (DEQAIRHERA…KSAEKELIKA (63 aa)) enclose the t-SNARE coiled-coil homology domain. Residues 280–300 (FICFLILLIVALIVILAIKLL) traverse the membrane as a helical; Anchor for type IV membrane protein segment. Arginine 301 is a topological domain (vesicular).

The protein belongs to the syntaxin family.

The protein localises to the golgi apparatus. It is found in the trans-Golgi network membrane. The protein resides in the endosome membrane. T-SNARE that functions in transport from the endosome to the late Golgi and on the endocytic pathway. The polypeptide is t-SNARE affecting a late Golgi compartment protein 2 (tlg2) (Schizosaccharomyces pombe (strain 972 / ATCC 24843) (Fission yeast)).